The primary structure comprises 83 residues: UPF0297 protein Moth_1643 (83 aa).

The protein belongs to the UPF0297 family.

In Moorella thermoacetica (strain ATCC 39073 / JCM 9320), this protein is UPF0297 protein Moth_1643.